Here is a 262-residue protein sequence, read N- to C-terminus: Ribosomal RNA small subunit methyltransferase A (262 aa).

The S-adenosyl-L-methionine site is built by asparagine 14, leucine 16, glycine 41, glutamate 62, aspartate 87, and asparagine 109.

Belongs to the class I-like SAM-binding methyltransferase superfamily. rRNA adenine N(6)-methyltransferase family. RsmA subfamily.

The protein resides in the cytoplasm. It carries out the reaction adenosine(1518)/adenosine(1519) in 16S rRNA + 4 S-adenosyl-L-methionine = N(6)-dimethyladenosine(1518)/N(6)-dimethyladenosine(1519) in 16S rRNA + 4 S-adenosyl-L-homocysteine + 4 H(+). Its function is as follows. Specifically dimethylates two adjacent adenosines (A1518 and A1519) in the loop of a conserved hairpin near the 3'-end of 16S rRNA in the 30S particle. May play a critical role in biogenesis of 30S subunits. The sequence is that of Ribosomal RNA small subunit methyltransferase A from Francisella tularensis subsp. novicida (strain U112).